The chain runs to 548 residues: Glucan endo-1,3-beta-glucosidase (548 aa).

The segment at residues 1-36 is a signal peptide (tat-type signal); the sequence is MPHDRKNSSRRAWAALCAAVLAVSGALVGVAAPASA. The GH64 domain maps to 38–396; sequence PATIPLTITN…PQAAYIKLDP (359 aa). The active-site Proton donor is E153. D169 (proton acceptor) is an active-site residue. The Ricin B-type lectin domain maps to 422 to 548; that stretch reads GTGALRIGST…NQTEAQRWTL (127 aa).

The protein belongs to the glycosyl hydrolase 64 family. Predicted to be exported by the Tat system. The position of the signal peptide cleavage has not been experimentally proven.

The protein localises to the periplasm. The catalysed reaction is Hydrolysis of (1-&gt;3)-beta-D-glucosidic linkages in (1-&gt;3)-beta-D-glucans.. Lysis of cellular walls containing beta-1,3-glucans. Implicated in the defense against fungal pathogens. This Arthrobacter sp. (strain YCWD3) protein is Glucan endo-1,3-beta-glucosidase (glcI).